An 86-amino-acid polypeptide reads, in one-letter code: Large ribosomal subunit protein bL27 (86 aa).

This sequence belongs to the bacterial ribosomal protein bL27 family.

The polypeptide is Large ribosomal subunit protein bL27 (Flavobacterium johnsoniae (strain ATCC 17061 / DSM 2064 / JCM 8514 / BCRC 14874 / CCUG 350202 / NBRC 14942 / NCIMB 11054 / UW101) (Cytophaga johnsonae)).